Here is a 447-residue protein sequence, read N- to C-terminus: N-succinylarginine dihydrolase (447 aa).

Residues 19 to 28 (AGLSFGNEAS), asparagine 110, and 137 to 138 (HR) contribute to the substrate site. Residue glutamate 174 is part of the active site. Arginine 212 is a substrate binding site. Histidine 248 is an active-site residue. The substrate site is built by aspartate 250 and asparagine 359. The active-site Nucleophile is the cysteine 365.

It belongs to the succinylarginine dihydrolase family. In terms of assembly, homodimer.

The enzyme catalyses N(2)-succinyl-L-arginine + 2 H2O + 2 H(+) = N(2)-succinyl-L-ornithine + 2 NH4(+) + CO2. Its pathway is amino-acid degradation; L-arginine degradation via AST pathway; L-glutamate and succinate from L-arginine: step 2/5. Catalyzes the hydrolysis of N(2)-succinylarginine into N(2)-succinylornithine, ammonia and CO(2). This is N-succinylarginine dihydrolase from Salmonella dublin (strain CT_02021853).